Reading from the N-terminus, the 149-residue chain is Protein TraJ (149 aa).

The protein resides in the cell membrane. This protein is essential for positively regulating the expression of transfer genes that are involved in the conjugal transfer of DNA between bacterial cells. The chain is Protein TraJ (traJ) from Escherichia coli.